An 89-amino-acid chain; its full sequence is UPF0335 protein Nwi_0989 (89 aa).

The protein belongs to the UPF0335 family.

This Nitrobacter winogradskyi (strain ATCC 25391 / DSM 10237 / CIP 104748 / NCIMB 11846 / Nb-255) protein is UPF0335 protein Nwi_0989.